A 176-amino-acid chain; its full sequence is Inner membrane-spanning protein YciB (176 aa).

6 helical membrane passes run 3–23 (FLFD…WGIF), 24–44 (TATA…AFRH), 49–69 (TMLW…LVLH), 72–92 (KFIQ…LLAA), 121–141 (VAWA…VHNF), and 149–169 (FKLF…SLWL).

This sequence belongs to the YciB family.

The protein resides in the cell inner membrane. Functionally, plays a role in cell envelope biogenesis, maintenance of cell envelope integrity and membrane homeostasis. The sequence is that of Inner membrane-spanning protein YciB from Burkholderia orbicola (strain MC0-3).